A 351-amino-acid chain; its full sequence is Uroporphyrinogen decarboxylase (351 aa).

Substrate is bound by residues 25–29 (RQAGR), Asp-74, Tyr-151, Ser-206, and His-325.

The protein belongs to the uroporphyrinogen decarboxylase family. As to quaternary structure, homodimer.

The protein localises to the cytoplasm. The catalysed reaction is uroporphyrinogen III + 4 H(+) = coproporphyrinogen III + 4 CO2. It functions in the pathway porphyrin-containing compound metabolism; protoporphyrin-IX biosynthesis; coproporphyrinogen-III from 5-aminolevulinate: step 4/4. Its function is as follows. Catalyzes the decarboxylation of four acetate groups of uroporphyrinogen-III to yield coproporphyrinogen-III. The polypeptide is Uroporphyrinogen decarboxylase (Prosthecochloris aestuarii (strain DSM 271 / SK 413)).